Reading from the N-terminus, the 414-residue chain is Glyceraldehyde-3-phosphate dehydrogenase, chloroplastic (414 aa).

The transit peptide at 1–76 directs the protein to the chloroplast; the sequence is MAFVAPVATV…GIVAATFGPT (76 aa). Residues 88 to 89, D112, and R156 each bind NADP(+); that span reads RI. D-glyceraldehyde 3-phosphate is bound by residues 230 to 232, T261, R276, 289 to 290, and R312; these read SCT and TG. C231 serves as the catalytic Nucleophile. N394 is an NADP(+) binding site.

This sequence belongs to the glyceraldehyde-3-phosphate dehydrogenase family. In terms of assembly, homotetramer.

Its subcellular location is the plastid. It is found in the chloroplast. The enzyme catalyses D-glyceraldehyde 3-phosphate + phosphate + NADP(+) = (2R)-3-phospho-glyceroyl phosphate + NADPH + H(+). It functions in the pathway carbohydrate biosynthesis; Calvin cycle. The polypeptide is Glyceraldehyde-3-phosphate dehydrogenase, chloroplastic (GAPA) (Chondrus crispus (Carrageen Irish moss)).